We begin with the raw amino-acid sequence, 122 residues long: Large ribosomal subunit protein uL18 (122 aa).

This sequence belongs to the universal ribosomal protein uL18 family. In terms of assembly, part of the 50S ribosomal subunit; part of the 5S rRNA/L5/L18/L25 subcomplex. Contacts the 5S and 23S rRNAs.

In terms of biological role, this is one of the proteins that bind and probably mediate the attachment of the 5S RNA into the large ribosomal subunit, where it forms part of the central protuberance. In Desulfitobacterium hafniense (strain Y51), this protein is Large ribosomal subunit protein uL18.